Here is a 553-residue protein sequence, read N- to C-terminus: Neutral amino acid transporter B(0) (553 aa).

The residue at position 1 (methionine 1) is an N-acetylmethionine. The Cytoplasmic portion of the chain corresponds to 1–50 (MAVDPPKADPKGVAVDSSRRCPALGSREDQSAKAGGCCGSRDRVRRCIRA). Residues 51 to 80 (NLLVLLTVAAVVAGVGLGLGVSAAGGADAL) traverse the membrane as a helical segment. Residues 81–93 (GPARLTRFAFPGE) are Extracellular-facing. A helical transmembrane segment spans residues 94-115 (LLLRLLKMIILPLVVCSLIGGA). The Cytoplasmic portion of the chain corresponds to 116–129 (ASLDPSALGRVGAW). Residues 130 to 152 (ALLFFLVTTLLASALGVGLALAL) form a helical membrane-spanning segment. At 153 to 236 (KPGAAVTAIT…INSTMVQLLC (84 aa)) the chain is on the extracellular side. 2 N-linked (GlcNAc...) asparagine glycosylation sites follow: asparagine 165 and asparagine 228. The chain crosses the membrane as a helical span at residues 237-260 (EVEGMNILGLVVFAIVFGVALRKL). The Cytoplasmic segment spans residues 261–269 (GPEGELLIR). The chain crosses the membrane as a helical span at residues 270–297 (FFNSFNDATMVLVSWIMWYAPVGILFLV). Residues 298–318 (ASKIVEMKDVRQLFISLGKYI) lie on the Extracellular side of the membrane. A helical membrane pass occupies residues 319-340 (LCCLLGHAIHGLLVLPLIYFLF). At 341–345 (TRKNP) the chain is on the cytoplasmic side. The discontinuously helical intramembrane region spans 346–376 (YRFLWGIMTPLATAFGTSSSSATLPLMMKCV). At 377-385 (EEKNGVAKH) the chain is on the cytoplasmic side. A helical transmembrane segment spans residues 386–412 (ISRFILPIGATVNMDGAALFQCVAAVF). Na(+)-binding residues include glycine 394, threonine 396, and asparagine 398. Residues 413–425 (IAQLNGVSLDFVK) lie on the Extracellular side of the membrane. The segment at residues 426 to 459 (IITILVTATASSVGAAGIPAGGVLTLAIILEAVS) is an intramembrane region (discontinuously helical). Topologically, residues 460-472 (LPVKDISLILAVD) are extracellular. Residues 473–494 (WLVDRSCTVLNVEGDAFGAGLL) form a helical membrane-spanning segment. The Na(+) site is built by asparagine 483 and aspartate 487. Over 495–553 (QSYVDRTKMPSSEPELIQVKNEVSLNPLPLATEEGNPLLKQYQGPTGDSSATFEKESVM) the chain is Cytoplasmic. Serine 505, serine 506, serine 518, serine 543, and serine 551 each carry phosphoserine. The segment at 531-553 (PLLKQYQGPTGDSSATFEKESVM) is disordered. Polar residues predominate over residues 537-546 (QGPTGDSSAT).

It belongs to the dicarboxylate/amino acid:cation symporter (DAACS) (TC 2.A.23) family. SLC1A5 subfamily. In terms of assembly, homotrimer. In terms of tissue distribution, highly expressed in adipose tissue. Detected in lung, skeletal muscle, large intestine, kidney and testis. Expressed in lung, brain, kidney and neural retina (at protein level). Expressed in Mueller cells (at protein level).

The protein resides in the cell membrane. Its subcellular location is the melanosome. The enzyme catalyses L-glutamine(out) + L-serine(in) + Na(+)(out) = L-glutamine(in) + L-serine(out) + Na(+)(in). The catalysed reaction is L-glutamine(in) + L-serine(out) + Na(+)(out) = L-glutamine(out) + L-serine(in) + Na(+)(in). It carries out the reaction L-threonine(in) + L-glutamine(out) + Na(+)(out) = L-threonine(out) + L-glutamine(in) + Na(+)(in). It catalyses the reaction L-threonine(out) + L-glutamine(in) + Na(+)(out) = L-threonine(in) + L-glutamine(out) + Na(+)(in). The enzyme catalyses L-asparagine(in) + L-glutamine(out) + Na(+)(out) = L-asparagine(out) + L-glutamine(in) + Na(+)(in). The catalysed reaction is L-asparagine(out) + L-glutamine(in) + Na(+)(out) = L-asparagine(in) + L-glutamine(out) + Na(+)(in). It carries out the reaction L-glutamine(in) + L-alanine(out) + Na(+)(out) = L-glutamine(out) + L-alanine(in) + Na(+)(in). It catalyses the reaction L-valine(out) + L-glutamine(in) + Na(+)(out) = L-valine(in) + L-glutamine(out) + Na(+)(in). The enzyme catalyses L-glutamine(in) + L-methionine(out) + Na(+)(out) = L-glutamine(out) + L-methionine(in) + Na(+)(in). The catalysed reaction is L-glutamine(in) + L-glutamate(out) + Na(+)(out) + H(+)(out) = L-glutamine(out) + L-glutamate(in) + Na(+)(in) + H(+)(in). It carries out the reaction D-serine(in) + L-glutamine(out) + Na(+)(out) = D-serine(out) + L-glutamine(in) + Na(+)(in). It catalyses the reaction D-serine(in) + L-alanine(out) + Na(+)(out) = D-serine(out) + L-alanine(in) + Na(+)(in). The enzyme catalyses nitrate(in) = nitrate(out). The catalysed reaction is iodide(out) = iodide(in). It carries out the reaction thiocyanate(in) = thiocyanate(out). Its activity is regulated as follows. Down-regulated at acidic pH, with the exception of L-glutamate transport which is up-regulated instead. Functionally, sodium-coupled antiporter of neutral amino acids. In a tri-substrate transport cycle, exchanges neutral amino acids between the extracellular and intracellular compartments, coupled to the inward cotransport of at least one sodium ion. The preferred substrate is the essential amino acid L-glutamine, a precursor for biosynthesis of proteins, nucleotides and amine sugars as well as an alternative fuel for mitochondrial oxidative phosphorylation. Exchanges L-glutamine with other neutral amino acids such as L-serine, L-threonine and L-asparagine in a bidirectional way. Provides L-glutamine to proliferating stem and activated cells driving the metabolic switch toward cell differentiation. The transport cycle is usually pH-independent, with the exception of L-glutamate. Transports extracellular L-glutamate coupled to the cotransport of one proton and one sodium ion in exchange for intracellular L-glutamine counter-ion. May provide for L-glutamate uptake in glial cells regulating glutamine/glutamate cycle in the nervous system. Can transport D-amino acids. Mediates D-serine release from the retinal glia potentially affecting NMDA receptor function in retinal neurons. Displays sodium- and amino acid-dependent but uncoupled channel-like anion conductance with a preference SCN(-) &gt;&gt; NO3(-) &gt; I(-) &gt; Cl(-). Through binding of the fusogenic protein syncytin-1/ERVW-1 may mediate trophoblasts syncytialization, the spontaneous fusion of their plasma membranes, an essential process in placental development. The chain is Neutral amino acid transporter B(0) (Slc1a5) from Mus musculus (Mouse).